A 345-amino-acid chain; its full sequence is uncharacterized protein (345 aa).

Its subcellular location is the plastid. It localises to the chloroplast. This is an uncharacterized protein from Chlamydomonas moewusii (Chlamydomonas eugametos).